Here is a 479-residue protein sequence, read N- to C-terminus: GMP reductase (479 aa).

CBS domains follow at residues 96–153 and 154–212; these read VLDT…VRDI and AVTD…ATDS. Residues 246–248 and 296–298 contribute to the NADP(+) site; these read DTA and GVG. C303 serves as the catalytic Thioimidate intermediate.

This sequence belongs to the IMPDH/GMPR family. GuaB1 subfamily. Requires a monovalent cation as cofactor.

It carries out the reaction IMP + NH4(+) + NADP(+) = GMP + NADPH + 2 H(+). The protein operates within purine metabolism; IMP biosynthesis via salvage pathway. In terms of biological role, involved in the purine-salvage pathway. Catalyzes the NADPH-dependent conversion of GMP to IMP. In Mycobacterium bovis (strain ATCC BAA-935 / AF2122/97), this protein is GMP reductase.